Consider the following 452-residue polypeptide: Probable diguanylate cyclase DgcT (452 aa).

Over 1 to 7 the chain is Cytoplasmic; it reads MEKDYLR. The helical transmembrane segment at 8-28 threads the bilayer; that stretch reads ISSTVLVSLLFGLALVLVNSW. The Periplasmic portion of the chain corresponds to 29-45; sequence FNQPGVEEVVPRSTYLM. A helical transmembrane segment spans residues 46–66; it reads VMIALFFIDTVAFIFMQLYFI. Over 67-74 the chain is Cytoplasmic; it reads YDRRQFSN. A helical membrane pass occupies residues 75-95; it reads CVLSLAFLSCLIYFVITVIII. Over 96 to 111 the chain is Periplasmic; that stretch reads QQIIEERLTSSVVQND. Residues 112-132 form a helical membrane-spanning segment; that stretch reads IAIYYLFRQMSLCILIFLALV. The Cytoplasmic segment spans residues 133 to 148; the sequence is NKVSENTKQRNLFSKK. A helical transmembrane segment spans residues 149–169; that stretch reads MTLCISLFFVFGGPIVAHILS. The Periplasmic portion of the chain corresponds to 170–195; sequence SHYESYNLHIAELTNENGQVVWKASY. The helical transmembrane segment at 196-216 threads the bilayer; it reads VTIMIFMWLTLLSVNLYFNGL. Residues 217-219 are Cytoplasmic-facing; sequence RYD. The helical transmembrane segment at 220–240 threads the bilayer; sequence IWNGVTVIAFCAVLYNISLLF. Residues 241-254 lie on the Periplasmic side of the membrane; sequence MSRYSVSTWYISRT. Residues 255-275 form a helical membrane-spanning segment; it reads IEVVSKLTVMVIFMCHIFSAL. Residues 276–452 are Cytoplasmic-facing; that stretch reads RVTKNIAHRD…RDVVNFCESP (177 aa). A GGDEF domain is found at 310–445; sequence TPYCVMIMDI…GRNKVVVRDV (136 aa). Mg(2+) contacts are provided by aspartate 318 and isoleucine 319. Substrate-binding residues include asparagine 326, histidine 331, and aspartate 335. Glutamate 361 contributes to the Mg(2+) binding site. Glutamate 361 serves as the catalytic Proton acceptor. Residue arginine 381 participates in substrate binding.

Homodimer. Requires Mg(2+) as cofactor.

Its subcellular location is the cell inner membrane. The catalysed reaction is 2 GTP = 3',3'-c-di-GMP + 2 diphosphate. It participates in purine metabolism; 3',5'-cyclic di-GMP biosynthesis. Probably catalyzes the synthesis of cyclic-di-GMP (c-di-GMP) via the condensation of 2 GTP molecules. Overexpression leads to a strong repression of swimming; swimming returns to normal when residues 359-360 are both mutated to Ala. Overexpression also leads to a 20-fold increase in c-di-GMP levels in vivo. Cyclic-di-GMP is a second messenger which controls cell surface-associated traits in bacteria. The protein is Probable diguanylate cyclase DgcT of Escherichia coli (strain K12).